A 335-amino-acid polypeptide reads, in one-letter code: Tetraacyldisaccharide 4'-kinase (335 aa).

Position 51-58 (51-58 (HVGGAGKT)) interacts with ATP.

Belongs to the LpxK family.

The catalysed reaction is a lipid A disaccharide + ATP = a lipid IVA + ADP + H(+). It functions in the pathway glycolipid biosynthesis; lipid IV(A) biosynthesis; lipid IV(A) from (3R)-3-hydroxytetradecanoyl-[acyl-carrier-protein] and UDP-N-acetyl-alpha-D-glucosamine: step 6/6. Transfers the gamma-phosphate of ATP to the 4'-position of a tetraacyldisaccharide 1-phosphate intermediate (termed DS-1-P) to form tetraacyldisaccharide 1,4'-bis-phosphate (lipid IVA). In Nitrobacter hamburgensis (strain DSM 10229 / NCIMB 13809 / X14), this protein is Tetraacyldisaccharide 4'-kinase.